The chain runs to 1135 residues: DNA-directed RNA polymerase I subunit RPA2 (1135 aa).

Positions 1–26 (MDVDGRWRNLPSGPSLKHLTDPSYGI) are disordered. Arginine 180 contacts RNA. The segment at 194-208 (VRPKWKSRGLGYTQF) is loop B. The interval 236-247 (LNFIYRKELFFL) is loop A. Aspartate 367 serves as a coordination point for RNA. 2 fork loop regions span residues 439–453 (LRSKTGLGFLQDSGL) and 474–489 (RGAAFAKMRTTTVRRL). Residue aspartate 755 participates in Mg(2+) binding. Lysine 890 is an RNA binding site. DNA-binding residues include lysine 1020 and arginine 1036. A Phosphoserine modification is found at serine 1051. Cysteine 1070, cysteine 1073, cysteine 1098, and cysteine 1101 together coordinate Zn(2+). Residues 1070-1101 (CVECGSLLSPLLEKPPPSWSAMRNRKYNCTVC) form a C4-type zinc finger.

Belongs to the RNA polymerase beta chain family. In terms of assembly, component of the RNA polymerase I (Pol I) complex consisting of 13 subunits: a ten-subunit catalytic core composed of POLR1A/RPA1, POLR1B/RPA2, POLR1C/RPAC1, POLR1D/RPAC2, POLR1H/RPA12, POLR2E/RPABC1, POLR2F/RPABC2, POLR2H/RPABC3, POLR2K/RPABC4 and POLR2L/RPABC5; a mobile stalk subunit POLR1F/RPA43 protruding from the core and additional subunits homologous to general transcription factors POLR1E/RPA49 and POLR1G/RPA34. Part of Pol I pre-initiation complex (PIC), in which Pol I core assembles with RRN3 and promoter-bound UTBF and SL1/TIF-IB complex. It depends on Mg(2+) as a cofactor.

Its subcellular location is the nucleus. The protein resides in the nucleolus. It is found in the chromosome. The enzyme catalyses RNA(n) + a ribonucleoside 5'-triphosphate = RNA(n+1) + diphosphate. Catalytic core component of RNA polymerase I (Pol I), a DNA-dependent RNA polymerase which synthesizes ribosomal RNA precursors using the four ribonucleoside triphosphates as substrates. Transcribes 47S pre-rRNAs from multicopy rRNA gene clusters, giving rise to 5.8S, 18S and 28S ribosomal RNAs. Pol I-mediated transcription cycle proceeds through transcription initiation, transcription elongation and transcription termination stages. During transcription initiation, Pol I pre-initiation complex (PIC) is recruited by the selectivity factor 1 (SL1/TIF-IB) complex bound to the core promoter that precedes an rDNA repeat unit. The PIC assembly bends the promoter favoring the formation of the transcription bubble and promoter escape. Once the polymerase has escaped from the promoter it enters the elongation phase during which RNA is actively polymerized, based on complementarity with the template DNA strand. Highly processive, assembles in structures referred to as 'Miller trees' where many elongating Pol I complexes queue and transcribe the same rDNA coding regions. At terminator sequences downstream of the rDNA gene, PTRF interacts with Pol I and halts Pol I transcription leading to the release of the RNA transcript and polymerase from the DNA. Forms Pol I active center together with the largest subunit POLR1A/RPA1. Appends one nucleotide at a time to the 3' end of the nascent RNA, with POLR1A/RPA1 contributing a Mg(2+)-coordinating DxDGD motif, and POLR1B/RPA2 participating in the coordination of a second Mg(2+) ion and providing lysine residues believed to facilitate Watson-Crick base pairing between the incoming nucleotide and the template base. Typically, Mg(2+) ions direct a 5' nucleoside triphosphate to form a phosphodiester bond with the 3' hydroxyl of the preceding nucleotide of the nascent RNA, with the elimination of pyrophosphate. Has proofreading activity: Pauses and backtracks to allow the cleavage of a missincorporated nucleotide via POLR1H/RPA12. High Pol I processivity is associated with decreased transcription fidelity. The chain is DNA-directed RNA polymerase I subunit RPA2 from Mus musculus (Mouse).